Here is a 55-residue protein sequence, read N- to C-terminus: Potassium channel toxin alpha-KTX 12 Sp2 (55 aa).

The N-terminal stretch at 1-18 (MRLAIILLLMTTIVLTIG) is a signal peptide. 3 cysteine pairs are disulfide-bonded: Cys-26/Cys-46, Cys-32/Cys-51, and Cys-36/Cys-53.

The protein belongs to the short scorpion toxin superfamily. Potassium channel inhibitor family. Alpha-KTx 12 subfamily. Expressed by the venom gland.

It is found in the secreted. In terms of biological role, blocks mouse voltage-gated potassium channels Kv1.3/KCNA3 (IC(50)=0.3-30 nM), when the channel is expressed in Jurkat T cells or in HEK293 cells. Also shows a weaker inhibition on mKv1.2/KCNA2 (IC(50)=56.9 nM) and mKv1.1/KCNA1 (IC(50)=485 nM). Probably through the inhibition of both Kv1.2/KCNA2 and Kv1.3/KCNA3, the toxin also reduces the free calcium concentration in Jurkat T cells, inhibits the activation of Jurkat T cells and reduces the release of inflammatory cytokines interleukin-2, showing a strong immunosuppressant effect. This is Potassium channel toxin alpha-KTX 12 Sp2 from Scorpiops pococki (Scorpion).